A 293-amino-acid chain; its full sequence is MPFVKVIKNKAYFKRYQVKFRRRREGKTDYRARKRLVVQDKNKYNTPKYRIVIRFTNTDIICQIIYAKIEGDKVLVSAYAHELPRYGVKVGLTNYAAAYCTGLLLARRLLTNLGLADKYAGQTDIDGEDFNVEHMGDGPRPFRAFLDVGLTRTTTGNRVFAAMKGAVDGGIDIPHSPSRFVGYDEESSQLEADKLRQYIFGGHVSDYMKYLQEEDEEKYKAHFSRFIKEGITADSMEQMYRDAHAKIRANPAHEKKQPRDGLVKKRWNRAKMSLKQKRDRVKQKKAAYLKTLE.

Residues 247-263 show a composition bias toward basic and acidic residues; sequence IRANPAHEKKQPRDGLV. Residues 247 to 283 are disordered; the sequence is IRANPAHEKKQPRDGLVKKRWNRAKMSLKQKRDRVKQ. Residues 264 to 283 show a composition bias toward basic residues; it reads KKRWNRAKMSLKQKRDRVKQ.

It belongs to the universal ribosomal protein uL18 family. In terms of assembly, component of the large ribosomal subunit (LSU).

It localises to the cytoplasm. The protein localises to the nucleus. Its function is as follows. Component of the ribosome, a large ribonucleoprotein complex responsible for the synthesis of proteins in the cell. The small ribosomal subunit (SSU) binds messenger RNAs (mRNAs) and translates the encoded message by selecting cognate aminoacyl-transfer RNA (tRNA) molecules. The large subunit (LSU) contains the ribosomal catalytic site termed the peptidyl transferase center (PTC), which catalyzes the formation of peptide bonds, thereby polymerizing the amino acids delivered by tRNAs into a polypeptide chain. The nascent polypeptides leave the ribosome through a tunnel in the LSU and interact with protein factors that function in enzymatic processing, targeting, and the membrane insertion of nascent chains at the exit of the ribosomal tunnel. This is Large ribosomal subunit protein uL18 (RPL5) from Suberites domuncula (Sponge).